We begin with the raw amino-acid sequence, 305 residues long: Phosphatidate cytidylyltransferase (305 aa).

A run of 7 helical transmembrane segments spans residues 24–44, 97–117, 124–144, 151–171, 202–222, 232–252, and 277–297; these read LLVFLVILLCTSLYPSSAFIV, PEHVDLIPWFFLFFWTVHLVF, LGPIGSTGLALFCMLYVSVPI, LYGFVHTDTPFIGIWWAIFLI, TVVGFVAGCIASILVSLIFYS, IAMPWILVALGIILGISGFFG, and MLDVLDSLLLSTPIVYAILLI.

The protein belongs to the CDS family.

It localises to the cell membrane. It carries out the reaction a 1,2-diacyl-sn-glycero-3-phosphate + CTP + H(+) = a CDP-1,2-diacyl-sn-glycerol + diphosphate. It participates in phospholipid metabolism; CDP-diacylglycerol biosynthesis; CDP-diacylglycerol from sn-glycerol 3-phosphate: step 3/3. The chain is Phosphatidate cytidylyltransferase (cdsA) from Chlamydia muridarum (strain MoPn / Nigg).